The primary structure comprises 485 residues: NADH-quinone oxidoreductase subunit N (485 aa).

Transmembrane regions (helical) follow at residues Leu8–Ile28, Phe35–Val55, Gly71–Ala91, Phe105–Leu125, Ala127–Phe147, Tyr159–Ala179, Leu203–Phe223, Pro235–Met255, Val271–Gln291, Leu297–Gln317, Val326–Leu346, Ala373–Ile393, Trp408–Val430, and Ile455–Ile475.

The protein belongs to the complex I subunit 2 family. In terms of assembly, NDH-1 is composed of 13 different subunits. Subunits NuoA, H, J, K, L, M, N constitute the membrane sector of the complex.

The protein localises to the cell inner membrane. The enzyme catalyses a quinone + NADH + 5 H(+)(in) = a quinol + NAD(+) + 4 H(+)(out). Its function is as follows. NDH-1 shuttles electrons from NADH, via FMN and iron-sulfur (Fe-S) centers, to quinones in the respiratory chain. The immediate electron acceptor for the enzyme in this species is believed to be ubiquinone. Couples the redox reaction to proton translocation (for every two electrons transferred, four hydrogen ions are translocated across the cytoplasmic membrane), and thus conserves the redox energy in a proton gradient. In Salmonella dublin (strain CT_02021853), this protein is NADH-quinone oxidoreductase subunit N.